We begin with the raw amino-acid sequence, 490 residues long: Bifunctional protein GlmU (490 aa).

The pyrophosphorylase stretch occupies residues 1–241; the sequence is MSSPGDTAVL…SALVAGVNNR (241 aa). UDP-N-acetyl-alpha-D-glucosamine contacts are provided by residues 12–15, Lys-26, Gln-83, 88–89, 112–114, Gly-151, Glu-166, Asn-181, and Asn-239; these read LAAG, GT, and SGD. A Mg(2+)-binding site is contributed by Asp-114. Asn-239 lines the Mg(2+) pocket. A linker region spans residues 242-262; the sequence is VQLAQLGAELNRRIVAAHQLA. Positions 263–490 are N-acetyltransferase; that stretch reads GVTVVDPATT…AGGRPAGEAE (228 aa). The UDP-N-acetyl-alpha-D-glucosamine site is built by Arg-344 and Lys-362. His-374 acts as the Proton acceptor in catalysis. UDP-N-acetyl-alpha-D-glucosamine-binding residues include Tyr-377 and Asn-388. Acetyl-CoA-binding positions include Ala-391, 397–398, Ser-416, and Ala-434; that span reads NY. The interval 462–490 is disordered; it reads RRKRPGSAAARAAEAAEKAAGGRPAGEAE. Residues 467–490 are compositionally biased toward low complexity; sequence GSAAARAAEAAEKAAGGRPAGEAE.

In the N-terminal section; belongs to the N-acetylglucosamine-1-phosphate uridyltransferase family. It in the C-terminal section; belongs to the transferase hexapeptide repeat family. In terms of assembly, homotrimer. Mg(2+) is required as a cofactor.

The protein resides in the cytoplasm. The enzyme catalyses alpha-D-glucosamine 1-phosphate + acetyl-CoA = N-acetyl-alpha-D-glucosamine 1-phosphate + CoA + H(+). It carries out the reaction N-acetyl-alpha-D-glucosamine 1-phosphate + UTP + H(+) = UDP-N-acetyl-alpha-D-glucosamine + diphosphate. It participates in nucleotide-sugar biosynthesis; UDP-N-acetyl-alpha-D-glucosamine biosynthesis; N-acetyl-alpha-D-glucosamine 1-phosphate from alpha-D-glucosamine 6-phosphate (route II): step 2/2. Its pathway is nucleotide-sugar biosynthesis; UDP-N-acetyl-alpha-D-glucosamine biosynthesis; UDP-N-acetyl-alpha-D-glucosamine from N-acetyl-alpha-D-glucosamine 1-phosphate: step 1/1. The protein operates within bacterial outer membrane biogenesis; LPS lipid A biosynthesis. Catalyzes the last two sequential reactions in the de novo biosynthetic pathway for UDP-N-acetylglucosamine (UDP-GlcNAc). The C-terminal domain catalyzes the transfer of acetyl group from acetyl coenzyme A to glucosamine-1-phosphate (GlcN-1-P) to produce N-acetylglucosamine-1-phosphate (GlcNAc-1-P), which is converted into UDP-GlcNAc by the transfer of uridine 5-monophosphate (from uridine 5-triphosphate), a reaction catalyzed by the N-terminal domain. The polypeptide is Bifunctional protein GlmU (Mycobacterium avium (strain 104)).